We begin with the raw amino-acid sequence, 242 residues long: Lactate utilization protein A 2 (242 aa).

It belongs to the LutA/YkgE family.

In terms of biological role, is involved in L-lactate degradation and allows cells to grow with lactate as the sole carbon source. The protein is Lactate utilization protein A 2 of Bacillus cereus (strain 03BB102).